Here is a 233-residue protein sequence, read N- to C-terminus: Antigenic membrane protein (233 aa).

Positions 1–32 are cleaved as a signal peptide; the sequence is MQNQKNQKSLVAKVLVLFAAVALMFVGVQVFA. The chain crosses the membrane as a helical span at residues 206 to 226; sequence FLTLVAVVVVAAVAGGVFFFV.

Its subcellular location is the cell membrane. The sequence is that of Antigenic membrane protein (amp) from Onion yellows phytoplasma (strain OY-M).